Reading from the N-terminus, the 86-residue chain is Small ribosomal subunit protein bS16 (86 aa).

It belongs to the bacterial ribosomal protein bS16 family.

In Methylacidiphilum infernorum (isolate V4) (Methylokorus infernorum (strain V4)), this protein is Small ribosomal subunit protein bS16.